A 680-amino-acid chain; its full sequence is MIDRYKHQQLRIGLVSPQQISAWATKKIPNGEIVGEVTKPYTFHYKTNKPEKDGLFCERIFGPIKSGICACGNYRVIGDEKEDPKFCEQCGVEFVDSRIRRYQMGYIKLTCPVTHVWYLKRLPSYIANLLDKPLKELEGLVYCDFSFARPITKKPTFLRLRGSFEYEIQSWKYSIPLFFTTQGFDIFRNREISTGAGAIREQLADLDLRIIIENSLVEWKQLGEEGPTGNEWEDRKIVRRKDFLVRRMELAKHFIRTNIEPEWMVLCLLPVLPPELRPIIQVEGGKLMSSDINELYRRVIYRNNTLTDLLTTSRSTPGELVMCQEKLVQEAVDTLLDNGIRGQPMRDGHNKVYKSFSDVIEGKEGRFRETLLGKRVDYSGRSVIVVGPSLSLHRCGLPREIAIELFQTFVIRGLIRQHLASNIGVAKSQIREKKPIVWEILQEVMQGHPVLLNRAPTLHRLGIQSFQPILVEGRTICLHPLVCKGFNADFDGDQMAVHVPLSLEAQAEARLLMFSHMNLLSPAIGDPISVPTQDMLIGLYVLTSGTRRGICANRYNPCNRKNYKNERIYETNYKYMKEPFFCNSYDAIGAYRQKRINLDSPLWLRWQLDQRVIASREVPIEVHYESFGNYHEIYAHYLIVRSVKKETFCIYIRTTAGHISFYREIEEAIQGFSQACSYDT.

Zn(2+) is bound by residues C69, C71, C87, and C90. Mg(2+) contacts are provided by D489, D491, and D493.

It belongs to the RNA polymerase beta' chain family. RpoC1 subfamily. As to quaternary structure, in plastids the minimal PEP RNA polymerase catalytic core is composed of four subunits: alpha, beta, beta', and beta''. When a (nuclear-encoded) sigma factor is associated with the core the holoenzyme is formed, which can initiate transcription. The cofactor is Mg(2+). Zn(2+) serves as cofactor.

Its subcellular location is the plastid. It localises to the chloroplast. The catalysed reaction is RNA(n) + a ribonucleoside 5'-triphosphate = RNA(n+1) + diphosphate. Functionally, DNA-dependent RNA polymerase catalyzes the transcription of DNA into RNA using the four ribonucleoside triphosphates as substrates. This Lobularia maritima (Sweet alyssum) protein is DNA-directed RNA polymerase subunit beta'.